An 86-amino-acid chain; its full sequence is Large ribosomal subunit protein bL27 (86 aa).

Residues 1–22 form a disordered region; sequence MATKKAGGSSRNGRDSAGRRLG.

The protein belongs to the bacterial ribosomal protein bL27 family.

The polypeptide is Large ribosomal subunit protein bL27 (Rickettsia peacockii (strain Rustic)).